The chain runs to 154 residues: Lipoprotein signal peptidase (154 aa).

3 consecutive transmembrane segments (helical) span residues 8–28, 58–78, and 88–108; these read LYLIVSLLVIIADQLLKNYIV, IFSGQMILFYLISIAAIAVVI, and NGLFDTGLALVLGGIIGNFID. Active-site residues include D117 and D133. Residues 131-151 form a helical membrane-spanning segment; that stretch reads IADSAITVGIILVFIYLIFIS.

It belongs to the peptidase A8 family.

It is found in the cell membrane. It carries out the reaction Release of signal peptides from bacterial membrane prolipoproteins. Hydrolyzes -Xaa-Yaa-Zaa-|-(S,diacylglyceryl)Cys-, in which Xaa is hydrophobic (preferably Leu), and Yaa (Ala or Ser) and Zaa (Gly or Ala) have small, neutral side chains.. It participates in protein modification; lipoprotein biosynthesis (signal peptide cleavage). In terms of biological role, this protein specifically catalyzes the removal of signal peptides from prolipoproteins. This Lactobacillus johnsonii (strain CNCM I-12250 / La1 / NCC 533) protein is Lipoprotein signal peptidase.